The following is a 575-amino-acid chain: Urease subunit alpha (575 aa).

Residues 137-575 (GGIDSHIHWI…LPMAQRYFLF (439 aa)) enclose the Urease domain. The Ni(2+) site is built by His142, His144, and Lys225. Lys225 is modified (N6-carboxylysine). Residue His227 coordinates substrate. Residues His254 and His280 each coordinate Ni(2+). His328 (proton donor) is an active-site residue. Asp368 lines the Ni(2+) pocket.

Belongs to the metallo-dependent hydrolases superfamily. Urease alpha subunit family. In terms of assembly, heterotrimer of UreA (gamma), UreB (beta) and UreC (alpha) subunits. Three heterotrimers associate to form the active enzyme. Requires Ni cation as cofactor. Post-translationally, carboxylation allows a single lysine to coordinate two nickel ions.

It localises to the cytoplasm. The enzyme catalyses urea + 2 H2O + H(+) = hydrogencarbonate + 2 NH4(+). The protein operates within nitrogen metabolism; urea degradation; CO(2) and NH(3) from urea (urease route): step 1/1. This is Urease subunit alpha from Leptothrix cholodnii (strain ATCC 51168 / LMG 8142 / SP-6) (Leptothrix discophora (strain SP-6)).